Consider the following 75-residue polypeptide: Protein Tlp homolog (75 aa).

The segment at 53-75 is disordered; sequence REALDGMREEIKDEARDKKNGYM.

This sequence belongs to the Tlp family.

The chain is Protein Tlp homolog from Clostridium botulinum (strain ATCC 19397 / Type A).